The sequence spans 310 residues: Cytosolic Fe-S cluster assembly factor Nubp1 homolog (310 aa).

[4Fe-4S] cluster contacts are provided by C9, C23, C26, and C32. An ATP-binding site is contributed by 63 to 70 (GKGGVGKS). Residues C240 and C243 each coordinate [4Fe-4S] cluster.

The protein belongs to the Mrp/NBP35 ATP-binding proteins family. NUBP1/NBP35 subfamily. Heterotetramer of 2 Nubp1 and 2 Nubp2 chains. The cofactor is [4Fe-4S] cluster.

The protein resides in the cytoplasm. Its function is as follows. Component of the cytosolic iron-sulfur (Fe/S) protein assembly (CIA) machinery. Required for maturation of extramitochondrial Fe-S proteins. The Nubp1-Nubp2 heterotetramer forms a Fe-S scaffold complex, mediating the de novo assembly of an Fe-S cluster and its transfer to target apoproteins. In Drosophila mojavensis (Fruit fly), this protein is Cytosolic Fe-S cluster assembly factor Nubp1 homolog.